The chain runs to 424 residues: 26S proteasome regulatory subunit 6A homolog A (424 aa).

The disordered stretch occupies residues 1 to 21; sequence MATPMVEDTSSFEEDQLASMS. At Ala-2 the chain carries N-acetylalanine. Ser-19 bears the Phosphoserine mark. 212–219 lines the ATP pocket; sequence GPPGTGKT. Lys-235 participates in a covalent cross-link: Glycyl lysine isopeptide (Lys-Gly) (interchain with G-Cter in ubiquitin). Residue Thr-278 is modified to O-acetylthreonine. Glycyl lysine isopeptide (Lys-Gly) (interchain with G-Cter in ubiquitin) cross-links involve residues Lys-279 and Lys-416.

The protein belongs to the AAA ATPase family. In terms of assembly, component of the 19S regulatory particle (RP/PA700) base subcomplex of the 26S proteasome. The 26S proteasome is composed of a core protease (CP), known as the 20S proteasome, capped at one or both ends by the 19S regulatory particle (RP/PA700). The RP/PA700 complex is composed of at least 17 different subunits in two subcomplexes, the base and the lid, which form the portions proximal and distal to the 20S proteolytic core, respectively. Ubiquitous.

It is found in the cytoplasm. It localises to the nucleus. Functionally, the 26S proteasome is involved in the ATP-dependent degradation of ubiquitinated proteins. The regulatory (or ATPase) complex confers ATP dependency and substrate specificity to the 26S complex. Interacts with transit peptides of proteins targeted to the chloroplast, and may be involved in the degradation of unimported plastid protein precursors. Plays a essential role in the gametophyte development. Involved in tolerance to zinc deficiency, possibly through alleviation of oxidative stresses or processing of poly-ubiquitinated proteins. This Arabidopsis thaliana (Mouse-ear cress) protein is 26S proteasome regulatory subunit 6A homolog A.